The following is a 554-amino-acid chain: D-3-phosphoglycerate dehydrogenase (554 aa).

Residues 177 to 178, aspartate 197, 256 to 258, and aspartate 282 each bind NAD(+); these read KI and CSR. The active site involves arginine 258. The active site involves glutamate 287. Histidine 305 (proton donor) is an active-site residue. 305–308 is an NAD(+) binding site; that stretch reads HLGA. The region spanning 482 to 554 is the ACT domain; sequence MLFTLHRDMP…GIRDAYTVKL (73 aa).

The protein belongs to the D-isomer specific 2-hydroxyacid dehydrogenase family.

It catalyses the reaction (2R)-3-phosphoglycerate + NAD(+) = 3-phosphooxypyruvate + NADH + H(+). It carries out the reaction (R)-2-hydroxyglutarate + NAD(+) = 2-oxoglutarate + NADH + H(+). The protein operates within amino-acid biosynthesis; L-serine biosynthesis; L-serine from 3-phospho-D-glycerate: step 1/3. Its function is as follows. Catalyzes the reversible oxidation of 3-phospho-D-glycerate to 3-phosphonooxypyruvate, the first step of the phosphorylated L-serine biosynthesis pathway. Also catalyzes the reversible oxidation of 2-hydroxyglutarate to 2-oxoglutarate. This chain is D-3-phosphoglycerate dehydrogenase (serA), found in Synechocystis sp. (strain ATCC 27184 / PCC 6803 / Kazusa).